Consider the following 49-residue polypeptide: Light-harvesting protein B-880 alpha chain (49 aa).

At 1–12 the chain is on the cytoplasmic side; the sequence is MYKLWLLFDPRR. The helical transmembrane segment at 13–33 threads the bilayer; it reads TLVALSAFLFVLGLIIHFISL. Residue H29 participates in a bacteriochlorophyll binding. The Periplasmic segment spans residues 34–49; sequence STDRFNWLEGKPAVRA.

This sequence belongs to the antenna complex alpha subunit family. In terms of assembly, the core complex is formed by different alpha and beta chains, binding bacteriochlorophyll molecules, and arranged most probably in tetrameric structures disposed around the reaction center. The non-pigmented gamma chains may constitute additional components.

It is found in the cell inner membrane. Antenna complexes are light-harvesting systems, which transfer the excitation energy to the reaction centers. The protein is Light-harvesting protein B-880 alpha chain of Rhodoblastus acidophilus (Rhodopseudomonas acidophila).